The sequence spans 185 residues: Ribosome-recycling factor (185 aa).

It belongs to the RRF family.

Its subcellular location is the cytoplasm. Its function is as follows. Responsible for the release of ribosomes from messenger RNA at the termination of protein biosynthesis. May increase the efficiency of translation by recycling ribosomes from one round of translation to another. This chain is Ribosome-recycling factor, found in Shewanella halifaxensis (strain HAW-EB4).